Here is a 251-residue protein sequence, read N- to C-terminus: PF03932 family protein CutC (251 aa).

Belongs to the CutC family.

It localises to the cytoplasm. The sequence is that of PF03932 family protein CutC from Edwardsiella ictaluri (strain 93-146).